Reading from the N-terminus, the 197-residue chain is Imidazoleglycerol-phosphate dehydratase (197 aa).

It belongs to the imidazoleglycerol-phosphate dehydratase family.

The protein resides in the cytoplasm. The enzyme catalyses D-erythro-1-(imidazol-4-yl)glycerol 3-phosphate = 3-(imidazol-4-yl)-2-oxopropyl phosphate + H2O. The protein operates within amino-acid biosynthesis; L-histidine biosynthesis; L-histidine from 5-phospho-alpha-D-ribose 1-diphosphate: step 6/9. The chain is Imidazoleglycerol-phosphate dehydratase from Pseudomonas putida (strain W619).